Consider the following 503-residue polypeptide: Probable cytosol aminopeptidase (503 aa).

Mn(2+) contacts are provided by Lys271 and Asp276. Lys283 is a catalytic residue. Residues Asp294, Asp353, and Glu355 each contribute to the Mn(2+) site. Arg357 is an active-site residue.

It belongs to the peptidase M17 family. The cofactor is Mn(2+).

It localises to the cytoplasm. It catalyses the reaction Release of an N-terminal amino acid, Xaa-|-Yaa-, in which Xaa is preferably Leu, but may be other amino acids including Pro although not Arg or Lys, and Yaa may be Pro. Amino acid amides and methyl esters are also readily hydrolyzed, but rates on arylamides are exceedingly low.. The enzyme catalyses Release of an N-terminal amino acid, preferentially leucine, but not glutamic or aspartic acids.. Its function is as follows. Presumably involved in the processing and regular turnover of intracellular proteins. Catalyzes the removal of unsubstituted N-terminal amino acids from various peptides. The polypeptide is Probable cytosol aminopeptidase (Chlorobaculum parvum (strain DSM 263 / NCIMB 8327) (Chlorobium vibrioforme subsp. thiosulfatophilum)).